Consider the following 239-residue polypeptide: MVQHLTAEEIIQYISDAKKSTPIKVYLNGNFEGITYPESFKVFGSEQSKVIFCEADDWKPFYEAYGSQFGDIEIEMDRRNSAIPLKDLTNTNARIEPGAFIREQAIIEDGAVVMMGATINIGAVVGEGTMIDMNATLGGRATTGKNVHVGAGAVLAGVIEPPSASPVIIEDDVLIGANAVILEGVRVGKGAIVAAGAIVTQDVPAGAVVAGTPAKVIKQASEVQDTKKEIVAALRKLND.

This sequence belongs to the transferase hexapeptide repeat family. DapH subfamily.

It carries out the reaction (S)-2,3,4,5-tetrahydrodipicolinate + acetyl-CoA + H2O = L-2-acetamido-6-oxoheptanedioate + CoA. It participates in amino-acid biosynthesis; L-lysine biosynthesis via DAP pathway; LL-2,6-diaminopimelate from (S)-tetrahydrodipicolinate (acetylase route): step 1/3. In terms of biological role, catalyzes the transfer of an acetyl group from acetyl-CoA to tetrahydrodipicolinate. This is 2,3,4,5-tetrahydropyridine-2,6-dicarboxylate N-acetyltransferase from Staphylococcus aureus (strain MRSA252).